Reading from the N-terminus, the 419-residue chain is Metacaspase-1B (419 aa).

Residues 1–109 form a disordered region; the sequence is MYHPNYNYPP…PPMEAQQFGK (109 aa). Over residues 33–50 the composition is skewed to pro residues; sequence SPPPPQPYYSNGYPPPSQ. The segment covering 51–66 has biased composition (low complexity); the sequence is SPHSYSPPQYPPHGQY. Polar residues predominate over residues 82-93; it reads QYRSYHSHSPSW. Catalysis depends on residues His210 and Cys266.

This sequence belongs to the peptidase C14B family.

Its function is as follows. Involved in cell death (apoptosis). The polypeptide is Metacaspase-1B (casB) (Aspergillus oryzae (strain ATCC 42149 / RIB 40) (Yellow koji mold)).